The chain runs to 90 residues: Acylphosphatase (90 aa).

In terms of domain architecture, Acylphosphatase-like spans 3–90 (QYHMIADGRV…KGYRTFSISY (88 aa)). Residues R18 and N36 contribute to the active site.

The protein belongs to the acylphosphatase family.

The catalysed reaction is an acyl phosphate + H2O = a carboxylate + phosphate + H(+). The protein is Acylphosphatase (acyP) of Bacillus velezensis (strain DSM 23117 / BGSC 10A6 / LMG 26770 / FZB42) (Bacillus amyloliquefaciens subsp. plantarum).